The following is a 366-amino-acid chain: Protein sigma-NS (366 aa).

The segment at 1–11 is important for ssRNA-binding and formation of complexes; it reads MASSLRAAISK.

The protein belongs to the orthoreovirus sigma-NS protein family. In terms of assembly, homooligomer; in presence of RNA. Interacts with protein mu-NS; this interaction allows the localization of sigma-NS to the viral factories. Interacts with host G3BP1 (via C-terminus); this interaction induces the relocalization of G3BP1 and other SG proteins to the viral factories periphery.

It is found in the host cytoplasm. In terms of biological role, protein that binds to ssRNA and participates with protein mu-NS in forming the matrix of viral factories, which are large inclusions in the host cytoplasm where replication intermediates are assembled and viral RNA replication takes place. Plays a role in the inhibition of the integrated stress response (ISR) to escape from host cell translational shutoff. Participates in the disruption of stress granules (SG) through its association with host G3BP1 and mu-NS. The sequence is that of Protein sigma-NS (S3) from Mammalia (T3D).